The sequence spans 610 residues: Elongation factor 4 (610 aa).

Residues 7–189 (SRIRNFSIIA…AIVQRIPPPK (183 aa)) form the tr-type G domain. GTP-binding positions include 19–24 (DHGKST) and 136–139 (NKID).

Belongs to the TRAFAC class translation factor GTPase superfamily. Classic translation factor GTPase family. LepA subfamily.

The protein localises to the cell inner membrane. The catalysed reaction is GTP + H2O = GDP + phosphate + H(+). Functionally, required for accurate and efficient protein synthesis under certain stress conditions. May act as a fidelity factor of the translation reaction, by catalyzing a one-codon backward translocation of tRNAs on improperly translocated ribosomes. Back-translocation proceeds from a post-translocation (POST) complex to a pre-translocation (PRE) complex, thus giving elongation factor G a second chance to translocate the tRNAs correctly. Binds to ribosomes in a GTP-dependent manner. The sequence is that of Elongation factor 4 from Thermus thermophilus (strain ATCC BAA-163 / DSM 7039 / HB27).